The sequence spans 119 residues: Large ribosomal subunit protein uL18 (119 aa).

This sequence belongs to the universal ribosomal protein uL18 family. As to quaternary structure, part of the 50S ribosomal subunit; part of the 5S rRNA/L5/L18/L25 subcomplex. Contacts the 5S and 23S rRNAs.

Its function is as follows. This is one of the proteins that bind and probably mediate the attachment of the 5S RNA into the large ribosomal subunit, where it forms part of the central protuberance. This Jannaschia sp. (strain CCS1) protein is Large ribosomal subunit protein uL18.